Here is a 434-residue protein sequence, read N- to C-terminus: Glutamyl-tRNA reductase (434 aa).

Substrate contacts are provided by residues threonine 49–arginine 52, serine 109, glutamate 114–glutamine 116, and glutamine 120. The active-site Nucleophile is the cysteine 50. Glycine 189–cysteine 194 contacts NADP(+).

The protein belongs to the glutamyl-tRNA reductase family. As to quaternary structure, homodimer.

The catalysed reaction is (S)-4-amino-5-oxopentanoate + tRNA(Glu) + NADP(+) = L-glutamyl-tRNA(Glu) + NADPH + H(+). The protein operates within porphyrin-containing compound metabolism; protoporphyrin-IX biosynthesis; 5-aminolevulinate from L-glutamyl-tRNA(Glu): step 1/2. In terms of biological role, catalyzes the NADPH-dependent reduction of glutamyl-tRNA(Glu) to glutamate 1-semialdehyde (GSA). This chain is Glutamyl-tRNA reductase, found in Trichlorobacter lovleyi (strain ATCC BAA-1151 / DSM 17278 / SZ) (Geobacter lovleyi).